A 560-amino-acid polypeptide reads, in one-letter code: Aluminum-activated malate transporter 12 (560 aa).

6 helical membrane passes run 54 to 74 (VGLSLTLVSLLYLMEPLFKGI), 78 to 98 (AIWAVMTVVVVLEFSAGATLC), 104 to 124 (GLGTLIAGSLAFFIEFVANDS), 130 to 150 (AIFIGTAVFIIGAAATYIRFI), 156 to 176 (NYDYGVVIFLLTFNLITVSSY), and 189 to 209 (FYTIAVGCGICLFMSLLVFPI). The disordered stretch occupies residues 386–421 (LHRHNNKHQNGSISNNKHHQRNSSNSGKDLNGDVSL). Residues 407–421 (NSSNSGKDLNGDVSL) are compositionally biased toward polar residues.

Belongs to the aromatic acid exporter (TC 2.A.85) family. As to expression, expressed in roots, stems, leaves, flowers and pollen. Mainly detected in the roots vascular stele and in the leaves guard cells.

The protein localises to the cell membrane. Functionally, malate-sensitive anion transporter permeable to chloride, nitrate, sulfate and malate. Involved in dark-, CO(2)-, abscisic acid- and water-deficient-induced stomatal closure. Belongs to the R-type anion channels. This is Aluminum-activated malate transporter 12 (ALMT12) from Arabidopsis thaliana (Mouse-ear cress).